Reading from the N-terminus, the 300-residue chain is Jacalin-related lectin 32 (300 aa).

Ala-2 is subject to N-acetylalanine. 2 consecutive Jacalin-type lectin domains span residues 2-146 and 154-297; these read AQKV…YFTT and AKKL…HILP.

This sequence belongs to the jacalin lectin family.

Its function is as follows. Involved in gametophytic development. This is Jacalin-related lectin 32 (JAL32) from Arabidopsis thaliana (Mouse-ear cress).